Reading from the N-terminus, the 587-residue chain is Protein FRIGIDA-ESSENTIAL 1 (587 aa).

The segment at 96-123 (KRAALPCKFFAKGWCFNGVSCKFLHVKE) adopts a C3H1-type zinc-finger fold. Disordered regions lie at residues 264–346 (DMGS…SFTI), 368–421 (GDRP…HQET), and 467–492 (IKPA…SDEI). Positions 294-304 (NGNSLSGSGSL) are enriched in low complexity. The segment covering 470–479 (AGHDSWHRSD) has biased composition (basic and acidic residues).

Component of the transcription activator complex FRI-C composed of FRI, FRL1, SUF4, FLX and FES1. Interacts with FLX, (via C-terminus) with FRI (via C-terminus), and with RIN1, a component of the SWR1 chromatin-remodeling complex. Expressed in root and shoot apices and vasculature.

It localises to the nucleus. Its function is as follows. Transcriptional activator involved in the FRIGIDA-mediated vernalization pathway, but not in the autonomous flowering pathway. Acts cooperatively with FRI (FRIGIDA) or FRL1 (FRIGIDA-LIKE 1) to promote FLC (FLOWERING LOCUS C) expression. Required for the stabilization of the FRI-C complex. The chain is Protein FRIGIDA-ESSENTIAL 1 (FES1) from Arabidopsis thaliana (Mouse-ear cress).